A 309-amino-acid chain; its full sequence is Transcription elongation factor S-II (309 aa).

The TFIIS N-terminal domain occupies 5–79; sequence EVLVHVKNLE…SSWKDAINKN (75 aa). Positions 78–142 are disordered; it reads KNKRSRQAQQ…NSKNDGVDTA (65 aa). Basic and acidic residues predominate over residues 88-102; the sequence is HHQDHAPGNAEDKTT. A compositionally biased stretch (polar residues) spans 103–120; sequence VGESVNGVQQPASSQSDA. S116 carries the phosphoserine modification. The TFIIS central domain occupies 148-264; the sequence is LRDQVLKALY…NAQGATIERS (117 aa). The TFIIS-type zinc finger occupies 267 to 307; that stretch reads DRFTCGKCKEKKVSYYQLQTRSADEPLTTFCTCEACGNRWK. The Zn(2+) site is built by C271, C274, C299, and C302.

This sequence belongs to the TFS-II family.

Its subcellular location is the nucleus. Necessary for efficient RNA polymerase II transcription elongation past template-encoded arresting sites. The arresting sites in DNA have the property of trapping a certain fraction of elongating RNA polymerases that pass through, resulting in locked ternary complexes. Cleavage of the nascent transcript by S-II allows the resumption of elongation from the new 3'-terminus. Functionally, can promote the transfer of one strand of a double-stranded DNA molecule to a homologous single strand and thus may be involved in recombination. The protein is Transcription elongation factor S-II (DST1) of Saccharomyces cerevisiae (strain ATCC 204508 / S288c) (Baker's yeast).